We begin with the raw amino-acid sequence, 207 residues long: Superoxide dismutase [Mn] (207 aa).

Mn(2+) contacts are provided by H28, H76, D160, and H164.

This sequence belongs to the iron/manganese superoxide dismutase family. Mn(2+) serves as cofactor.

The enzyme catalyses 2 superoxide + 2 H(+) = H2O2 + O2. Its function is as follows. Destroys superoxide anion radicals which are normally produced within the cells and which are toxic to biological systems. In Mycobacterium lepraemurium, this protein is Superoxide dismutase [Mn] (sodA).